The following is a 610-amino-acid chain: UvrABC system protein C (610 aa).

One can recognise a GIY-YIG domain in the interval His13–Val91. The region spanning Gly201 to Val236 is the UVR domain.

The protein belongs to the UvrC family. As to quaternary structure, interacts with UvrB in an incision complex.

Its subcellular location is the cytoplasm. In terms of biological role, the UvrABC repair system catalyzes the recognition and processing of DNA lesions. UvrC both incises the 5' and 3' sides of the lesion. The N-terminal half is responsible for the 3' incision and the C-terminal half is responsible for the 5' incision. The protein is UvrABC system protein C of Actinobacillus pleuropneumoniae serotype 7 (strain AP76).